The sequence spans 394 residues: Nicotinate phosphoribosyltransferase (394 aa).

At H218 the chain carries Phosphohistidine; by autocatalysis.

Belongs to the NAPRTase family. Post-translationally, transiently phosphorylated on a His residue during the reaction cycle. Phosphorylation strongly increases the affinity for substrates and increases the rate of nicotinate D-ribonucleotide production. Dephosphorylation regenerates the low-affinity form of the enzyme, leading to product release.

It catalyses the reaction nicotinate + 5-phospho-alpha-D-ribose 1-diphosphate + ATP + H2O = nicotinate beta-D-ribonucleotide + ADP + phosphate + diphosphate. It functions in the pathway cofactor biosynthesis; NAD(+) biosynthesis; nicotinate D-ribonucleotide from nicotinate: step 1/1. Its function is as follows. Catalyzes the synthesis of beta-nicotinate D-ribonucleotide from nicotinate and 5-phospho-D-ribose 1-phosphate at the expense of ATP. The polypeptide is Nicotinate phosphoribosyltransferase (Xylella fastidiosa (strain Temecula1 / ATCC 700964)).